The primary structure comprises 108 residues: Insulin-like peptide 17 (108 aa).

The first 19 residues, 1-19 (MFSTRGVLLLLSLMAAVAA), serve as a signal peptide directing secretion.

The protein belongs to the insulin family. Expressed in head neurons and the uterus.

The protein localises to the secreted. In terms of biological role, involved in the regulation of the larval diapause. The protein is Insulin-like peptide 17 of Caenorhabditis elegans.